We begin with the raw amino-acid sequence, 239 residues long: MMEWRDEGALLSVRRHGESSAIIEVFTAAHGRHAGVVRGGASRKIAPILQPGAQLDLTWKARLDEHMGAFTVEPLRSRTALLGDRLGLAGLNAICAMLHVTLPEREPHSTLWQESMALLDALDRPGWPPAYLRWEMRLLEETGFGLDLTRCAVTGSREDLAFVSPKTGRAVSRGAAGGWADRLFPLPLALLGQGPASAEEVRQGLAITGHFLGRELAPLLNGRPMPEARARLMELLARA.

The protein belongs to the RecO family.

Its function is as follows. Involved in DNA repair and RecF pathway recombination. In Cereibacter sphaeroides (strain KD131 / KCTC 12085) (Rhodobacter sphaeroides), this protein is DNA repair protein RecO.